The primary structure comprises 103 residues: Large ribosomal subunit protein uL23c (103 aa).

It belongs to the universal ribosomal protein uL23 family. As to quaternary structure, part of the 50S ribosomal subunit.

It localises to the plastid. Its subcellular location is the chloroplast. Its function is as follows. Binds to 23S rRNA. This chain is Large ribosomal subunit protein uL23c (rpl23), found in Gracilaria tenuistipitata var. liui (Red alga).